Consider the following 389-residue polypeptide: NADH-dependent butanol dehydrogenase A (389 aa).

It belongs to the iron-containing alcohol dehydrogenase family. In terms of assembly, homodimer.

It functions in the pathway alcohol metabolism; butanol biosynthesis. This is NADH-dependent butanol dehydrogenase A (bdhA) from Clostridium acetobutylicum (strain ATCC 824 / DSM 792 / JCM 1419 / IAM 19013 / LMG 5710 / NBRC 13948 / NRRL B-527 / VKM B-1787 / 2291 / W).